The following is a 114-amino-acid chain: Iron-sulfur cluster insertion protein ErpA (114 aa).

3 residues coordinate iron-sulfur cluster: cysteine 42, cysteine 106, and cysteine 108.

The protein belongs to the HesB/IscA family. Homodimer. The cofactor is iron-sulfur cluster.

Functionally, required for insertion of 4Fe-4S clusters for at least IspG. The chain is Iron-sulfur cluster insertion protein ErpA from Salmonella typhi.